The primary structure comprises 302 residues: Lipoyl synthase (302 aa).

Positions 44, 49, 55, 70, 74, 77, and 283 each coordinate [4Fe-4S] cluster. One can recognise a Radical SAM core domain in the interval 56–272; it reads WSKKHATVMI…ARVAKSKGFL (217 aa).

Belongs to the radical SAM superfamily. Lipoyl synthase family. Requires [4Fe-4S] cluster as cofactor.

The protein resides in the cytoplasm. The catalysed reaction is [[Fe-S] cluster scaffold protein carrying a second [4Fe-4S](2+) cluster] + N(6)-octanoyl-L-lysyl-[protein] + 2 oxidized [2Fe-2S]-[ferredoxin] + 2 S-adenosyl-L-methionine + 4 H(+) = [[Fe-S] cluster scaffold protein] + N(6)-[(R)-dihydrolipoyl]-L-lysyl-[protein] + 4 Fe(3+) + 2 hydrogen sulfide + 2 5'-deoxyadenosine + 2 L-methionine + 2 reduced [2Fe-2S]-[ferredoxin]. It participates in protein modification; protein lipoylation via endogenous pathway; protein N(6)-(lipoyl)lysine from octanoyl-[acyl-carrier-protein]: step 2/2. In terms of biological role, catalyzes the radical-mediated insertion of two sulfur atoms into the C-6 and C-8 positions of the octanoyl moiety bound to the lipoyl domains of lipoate-dependent enzymes, thereby converting the octanoylated domains into lipoylated derivatives. This is Lipoyl synthase from Orientia tsutsugamushi (strain Ikeda) (Rickettsia tsutsugamushi).